The sequence spans 360 residues: Ribosomal RNA large subunit methyltransferase M (360 aa).

S-adenosyl-L-methionine-binding positions include serine 192, 225–228 (APGG), aspartate 244, aspartate 264, and aspartate 280. Catalysis depends on lysine 309, which acts as the Proton acceptor.

This sequence belongs to the class I-like SAM-binding methyltransferase superfamily. RNA methyltransferase RlmE family. RlmM subfamily. Monomer.

Its subcellular location is the cytoplasm. It catalyses the reaction cytidine(2498) in 23S rRNA + S-adenosyl-L-methionine = 2'-O-methylcytidine(2498) in 23S rRNA + S-adenosyl-L-homocysteine + H(+). In terms of biological role, catalyzes the 2'-O-methylation at nucleotide C2498 in 23S rRNA. The sequence is that of Ribosomal RNA large subunit methyltransferase M from Alkalilimnicola ehrlichii (strain ATCC BAA-1101 / DSM 17681 / MLHE-1).